The chain runs to 87 residues: Acyl-CoA-binding protein (87 aa).

Serine 2 is modified (N-acetylserine). Residues 2 to 87 (SQAEFDKAAE…VEELKKKYGI (86 aa)) form the ACB domain. At lysine 8 the chain carries N6-acetyllysine; alternate. N6-succinyllysine; alternate is present on lysine 8. Position 14 (lysine 14) interacts with an acyl-CoA. Lysine 17 is subject to N6-succinyllysine. Residue lysine 19 is modified to N6-acetyllysine. Tyrosine 29 is modified (phosphotyrosine). An acyl-CoA-binding positions include 29-33 (YSHYK), lysine 51, lysine 55, and tyrosine 74. The residue at position 51 (lysine 51) is an N6-acetyllysine. Lysine 55 is modified (N6-acetyllysine; alternate). The residue at position 55 (lysine 55) is an N6-succinyllysine; alternate. Lysine 55 is subject to N6-(2-hydroxyisobutyryl)lysine; alternate. The residue at position 55 (lysine 55) is an N6-malonyllysine; alternate. At lysine 77 the chain carries N6-acetyllysine; alternate. Lysine 77 bears the N6-succinyllysine; alternate mark.

Belongs to the ACBP family. As to quaternary structure, monomer.

It is found in the endoplasmic reticulum. It localises to the golgi apparatus. Binds medium- and long-chain acyl-CoA esters with very high affinity and may function as an intracellular carrier of acyl-CoA esters. It is also able to displace diazepam from the benzodiazepine (BZD) recognition site located on the GABA type A receptor. It is therefore possible that this protein also acts as a neuropeptide to modulate the action of the GABA receptor. In Bos taurus (Bovine), this protein is Acyl-CoA-binding protein (DBI).